The following is a 475-amino-acid chain: tRNA modification GTPase MnmE (475 aa).

Residues Arg32, Glu97, and Lys136 each coordinate (6S)-5-formyl-5,6,7,8-tetrahydrofolate. The 165-residue stretch at 232–396 folds into the TrmE-type G domain; it reads GVATVIAGRP…LKSRMSSMVE (165 aa). GTP contacts are provided by residues 242–247, 261–267, 286–289, and 377–379; these read NAGKST, SHMPGTT, DTAG, and SAR. Mg(2+) is bound by residues Ser246 and Thr267. Lys475 provides a ligand contact to (6S)-5-formyl-5,6,7,8-tetrahydrofolate.

This sequence belongs to the TRAFAC class TrmE-Era-EngA-EngB-Septin-like GTPase superfamily. TrmE GTPase family. As to quaternary structure, homodimer. Heterotetramer of two MnmE and two MnmG subunits. Requires K(+) as cofactor.

It localises to the cytoplasm. Exhibits a very high intrinsic GTPase hydrolysis rate. Involved in the addition of a carboxymethylaminomethyl (cmnm) group at the wobble position (U34) of certain tRNAs, forming tRNA-cmnm(5)s(2)U34. This Chlorobium phaeobacteroides (strain DSM 266 / SMG 266 / 2430) protein is tRNA modification GTPase MnmE.